The sequence spans 201 residues: MLKEVRPAVVSLLALTMITGLAYPLAVTGLATVLFPYQAQGSLVERGGKVVGSALIGQEFKGDEYFHGRPSATVAPDPADSSKTVSAPYNAANSGGSNLGPTSKALADRLSEDVAKLKAENPAAPIPVDLVTTSGSGLDPDISPEGALFQVPRVAKARGVTEEQIRKLVGASIEQPLGGVLGESRVNVLKLNLALDAAAPR.

Residues 12–34 (LLALTMITGLAYPLAVTGLATVL) form a helical membrane-spanning segment. Positions 69-102 (RPSATVAPDPADSSKTVSAPYNAANSGGSNLGPT) are disordered. Residues 81-101 (SSKTVSAPYNAANSGGSNLGP) show a composition bias toward polar residues.

It belongs to the KdpC family. The system is composed of three essential subunits: KdpA, KdpB and KdpC.

The protein resides in the cell inner membrane. Part of the high-affinity ATP-driven potassium transport (or Kdp) system, which catalyzes the hydrolysis of ATP coupled with the electrogenic transport of potassium into the cytoplasm. This subunit acts as a catalytic chaperone that increases the ATP-binding affinity of the ATP-hydrolyzing subunit KdpB by the formation of a transient KdpB/KdpC/ATP ternary complex. This is Potassium-transporting ATPase KdpC subunit from Rhodopseudomonas palustris (strain TIE-1).